A 487-amino-acid polypeptide reads, in one-letter code: 3-octaprenyl-4-hydroxybenzoate carboxy-lyase (487 aa).

Asn-172 lines the Mn(2+) pocket. Residues 175-177, 189-191, and 194-195 each bind prenylated FMN; these read IYR, RWL, and RG. Glu-238 contacts Mn(2+). Catalysis depends on Asp-287, which acts as the Proton donor.

Belongs to the UbiD family. In terms of assembly, homohexamer. Prenylated FMN serves as cofactor. Mn(2+) is required as a cofactor.

The protein resides in the cell membrane. The enzyme catalyses a 4-hydroxy-3-(all-trans-polyprenyl)benzoate + H(+) = a 2-(all-trans-polyprenyl)phenol + CO2. It functions in the pathway cofactor biosynthesis; ubiquinone biosynthesis. In terms of biological role, catalyzes the decarboxylation of 3-octaprenyl-4-hydroxy benzoate to 2-octaprenylphenol, an intermediate step in ubiquinone biosynthesis. This Nitrosomonas eutropha (strain DSM 101675 / C91 / Nm57) protein is 3-octaprenyl-4-hydroxybenzoate carboxy-lyase.